The chain runs to 710 residues: DNA polymerase epsilon subunit B (710 aa).

The interval F116–E167 is disordered. Polar residues predominate over residues N121–S144.

Belongs to the DNA polymerase epsilon subunit B family. In terms of assembly, heterotetramer. Consists of four subunits: POL2, DPB2, DPB3 and DPB4.

It is found in the nucleus. Functionally, as accessory component of the DNA polymerase epsilon (DNA polymerase II) participates in chromosomal DNA replication. The sequence is that of DNA polymerase epsilon subunit B (DPB2) from Kluyveromyces lactis (strain ATCC 8585 / CBS 2359 / DSM 70799 / NBRC 1267 / NRRL Y-1140 / WM37) (Yeast).